Here is a 444-residue protein sequence, read N- to C-terminus: Transcription activator AFTR-2 (444 aa).

Residues 16-43 (CDFCTQSKLRCNKNKPSCRRCTLQQQPC) constitute a DNA-binding region (zn(2)-C6 fungal-type). The segment at 49-88 (RRTGRPPKHPRKANDCQEANGQHGDQDPVTSTPGGSYQQQ) is disordered. Over residues 50-59 (RTGRPPKHPR) the composition is skewed to basic residues. Residues 76–88 (PVTSTPGGSYQQQ) are compositionally biased toward polar residues.

The protein localises to the nucleus. Its function is as follows. Transcription factor that regulates the expression of the gene clusters that mediate the biosynthesis of the host-selective toxins (HSTs) AF-toxins responsible for Alternaria black spot of strawberry disease by the strawberry pathotype. On cellular level, AF-toxins affect plasma membrane of susceptible cells and cause a sudden increase in loss of K(+) after a few minutes of toxin treatment. The polypeptide is Transcription activator AFTR-2 (Alternaria alternata (Alternaria rot fungus)).